The sequence spans 366 residues: Galactoside alpha-(1,2)-fucosyltransferase 1 (366 aa).

The Cytoplasmic segment spans residues methionine 1–histidine 8. Residues leucine 9–phenylalanine 25 traverse the membrane as a helical; Signal-anchor for type II membrane protein segment. Over leucine 26–proline 366 the chain is Lumenal. 3 N-linked (GlcNAc...) asparagine glycosylation sites follow: asparagine 66, asparagine 302, and asparagine 328.

It belongs to the glycosyltransferase 11 family.

Its subcellular location is the golgi apparatus. The protein resides in the golgi stack membrane. It carries out the reaction a beta-D-galactosyl-(1-&gt;4)-N-acetyl-beta-D-glucosaminyl derivative + GDP-beta-L-fucose = an alpha-L-Fuc-(1-&gt;2)-beta-D-Gal-(1-&gt;4)-beta-D-GlcNAc derivative + GDP + H(+). It catalyses the reaction a ganglioside GA1 + GDP-beta-L-fucose = a ganglioside Fuc-GA1 + GDP + H(+). The enzyme catalyses a beta-D-Gal-(1-&gt;3)-beta-D-GlcNAc-(1-&gt;3)-beta-D-Gal-(1-&gt;4)-beta-D-Glc-(1&lt;-&gt;1')-Cer(d18:1(4E)) + GDP-beta-L-fucose = alpha-L-fucosyl-(1-&gt;2)- beta-D-galactosyl-(1-&gt;3)-N-acetyl-beta-D-glucosaminyl-(1-&gt;3)-beta-D-galactosyl-(1-&gt;4)-beta-D-glucosyl-(1&lt;-&gt;1')-N-acylsphing-4-enine + GDP + H(+). The catalysed reaction is a neolactoside nLc4Cer(d18:1(4E)) + GDP-beta-L-fucose = a neolactoside IV(2)-alpha-Fuc-nLc4Cer(d18:1(4E)) + GDP + H(+). It carries out the reaction a ganglioside GM1 + GDP-beta-L-fucose = a ganglioside Fuc-GM1 + GDP + H(+). It catalyses the reaction beta-D-galactosyl-(1-&gt;3)-N-acetyl-D-galactosamine + GDP-beta-L-fucose = alpha-L-fucosyl-(1-&gt;2)-beta-D-galactosyl-(1-&gt;3)-N-acetyl-D-galactosamine + GDP + H(+). It functions in the pathway protein modification; protein glycosylation. Its function is as follows. Catalyzes the transfer of L-fucose, from a guanosine diphosphate-beta-L-fucose, to the terminal galactose residue of glycoconjugates through an alpha(1,2) linkage leading to H antigen synthesis that is an intermediate substrate in the synthesis of ABO blood group antigens. H antigen is essential for maturation of the glomerular layer of the main olfactory bulb, in cell migration and early cell-cell contacts during tumor associated angiogenesis. Preferentially fucosylates soluble lactose and to a lesser extent fucosylates glycolipids gangliosides GA1 and GM1a. The sequence is that of Galactoside alpha-(1,2)-fucosyltransferase 1 from Aotus azarae (Azara's night monkey).